A 463-amino-acid polypeptide reads, in one-letter code: Chaperone SurA (463 aa).

The N-terminal stretch at 1 to 25 (MTKPFSVVLASLLAITSTVSPLASA) is a signal peptide. 2 consecutive PpiC domains span residues 174-276 (GSQY…KLVE) and 289-388 (VTEY…QRVG). Disordered regions lie at residues 329–348 (ATAKESSEDTNSRGQGGDLG) and 431–463 (YRTGDRADDNATAAPAKSPDPAAPSPPPAKPTR). Residues 441-450 (ATAAPAKSPD) show a composition bias toward low complexity. A compositionally biased stretch (pro residues) spans 451–463 (PAAPSPPPAKPTR).

Its subcellular location is the periplasm. It carries out the reaction [protein]-peptidylproline (omega=180) = [protein]-peptidylproline (omega=0). Chaperone involved in the correct folding and assembly of outer membrane proteins. Recognizes specific patterns of aromatic residues and the orientation of their side chains, which are found more frequently in integral outer membrane proteins. May act in both early periplasmic and late outer membrane-associated steps of protein maturation. The protein is Chaperone SurA of Xanthomonas axonopodis pv. citri (strain 306).